The sequence spans 659 residues: UvrABC system protein B (659 aa).

A Helicase ATP-binding domain is found at 25–182 (QSIENGNRGQ…KKLIEIQYER (158 aa)). Residue 38–45 (GVTGSGKT) coordinates ATP. Positions 91–114 (YYDYYQPEAYVPQTDTFIEKDASI) match the Beta-hairpin motif. Positions 429 to 582 (QIDDLYGEIQ…QMEYNEEHNI (154 aa)) constitute a Helicase C-terminal domain. The region spanning 622-657 (EKLIEQYEEEMKEAAKNLQFERAAELRDIIKDLKEN) is the UVR domain.

This sequence belongs to the UvrB family. As to quaternary structure, forms a heterotetramer with UvrA during the search for lesions. Interacts with UvrC in an incision complex.

The protein resides in the cytoplasm. Its function is as follows. The UvrABC repair system catalyzes the recognition and processing of DNA lesions. A damage recognition complex composed of 2 UvrA and 2 UvrB subunits scans DNA for abnormalities. Upon binding of the UvrA(2)B(2) complex to a putative damaged site, the DNA wraps around one UvrB monomer. DNA wrap is dependent on ATP binding by UvrB and probably causes local melting of the DNA helix, facilitating insertion of UvrB beta-hairpin between the DNA strands. Then UvrB probes one DNA strand for the presence of a lesion. If a lesion is found the UvrA subunits dissociate and the UvrB-DNA preincision complex is formed. This complex is subsequently bound by UvrC and the second UvrB is released. If no lesion is found, the DNA wraps around the other UvrB subunit that will check the other stand for damage. The protein is UvrABC system protein B of Clostridium perfringens (strain SM101 / Type A).